We begin with the raw amino-acid sequence, 447 residues long: Diaminopimelate decarboxylase (447 aa).

Lysine 72 bears the N6-(pyridoxal phosphate)lysine mark. Residues glycine 258 and 300 to 303 (EPGR) contribute to the pyridoxal 5'-phosphate site. 3 residues coordinate substrate: arginine 303, arginine 344, and tyrosine 348. Cysteine 375 (proton donor) is an active-site residue. Substrate contacts are provided by glutamate 376 and tyrosine 405. Position 405 (tyrosine 405) interacts with pyridoxal 5'-phosphate.

The protein belongs to the Orn/Lys/Arg decarboxylase class-II family. LysA subfamily. Homodimer. It depends on pyridoxal 5'-phosphate as a cofactor.

It carries out the reaction meso-2,6-diaminopimelate + H(+) = L-lysine + CO2. It participates in amino-acid biosynthesis; L-lysine biosynthesis via DAP pathway; L-lysine from DL-2,6-diaminopimelate: step 1/1. Its function is as follows. Specifically catalyzes the decarboxylation of meso-diaminopimelate (meso-DAP) to L-lysine. The sequence is that of Diaminopimelate decarboxylase from Mycobacterium bovis (strain ATCC BAA-935 / AF2122/97).